The sequence spans 72 residues: Cell division protein ZapB (72 aa).

The stretch at Met1–Val72 forms a coiled coil. The disordered stretch occupies residues Lys33–Asn57. Over residues Leu44–Asn57 the composition is skewed to basic and acidic residues.

The protein belongs to the ZapB family. In terms of assembly, homodimer. The ends of the coiled-coil dimer bind to each other, forming polymers. Interacts with FtsZ.

The protein resides in the cytoplasm. Non-essential, abundant cell division factor that is required for proper Z-ring formation. It is recruited early to the divisome by direct interaction with FtsZ, stimulating Z-ring assembly and thereby promoting cell division earlier in the cell cycle. Its recruitment to the Z-ring requires functional FtsA or ZipA. In Pasteurella multocida (strain Pm70), this protein is Cell division protein ZapB.